The following is a 407-amino-acid chain: Imidazolonepropionase (407 aa).

H68 and H70 together coordinate Fe(3+). Zn(2+) is bound by residues H68 and H70. 4-imidazolone-5-propanoate-binding residues include R77, Y140, and H173. Position 140 (Y140) interacts with N-formimidoyl-L-glutamate. H236 provides a ligand contact to Fe(3+). H236 serves as a coordination point for Zn(2+). Residue Q239 participates in 4-imidazolone-5-propanoate binding. D311 is a binding site for Fe(3+). Residue D311 participates in Zn(2+) binding. Residues N313 and G315 each contribute to the N-formimidoyl-L-glutamate site. T316 lines the 4-imidazolone-5-propanoate pocket.

This sequence belongs to the metallo-dependent hydrolases superfamily. HutI family. Zn(2+) is required as a cofactor. It depends on Fe(3+) as a cofactor.

It is found in the cytoplasm. It carries out the reaction 4-imidazolone-5-propanoate + H2O = N-formimidoyl-L-glutamate. It participates in amino-acid degradation; L-histidine degradation into L-glutamate; N-formimidoyl-L-glutamate from L-histidine: step 3/3. Its function is as follows. Catalyzes the hydrolytic cleavage of the carbon-nitrogen bond in imidazolone-5-propanoate to yield N-formimidoyl-L-glutamate. It is the third step in the universal histidine degradation pathway. This is Imidazolonepropionase from Stenotrophomonas maltophilia (strain R551-3).